The sequence spans 162 residues: Probable chorismate pyruvate-lyase (162 aa).

3 residues coordinate substrate: Arg54, Leu92, and Glu149.

The protein belongs to the UbiC family.

Its subcellular location is the cytoplasm. It catalyses the reaction chorismate = 4-hydroxybenzoate + pyruvate. It participates in cofactor biosynthesis; ubiquinone biosynthesis. In terms of biological role, removes the pyruvyl group from chorismate, with concomitant aromatization of the ring, to provide 4-hydroxybenzoate (4HB) for the ubiquinone pathway. The polypeptide is Probable chorismate pyruvate-lyase (Methylococcus capsulatus (strain ATCC 33009 / NCIMB 11132 / Bath)).